The chain runs to 666 residues: Tripartite terminase subunit 3 (666 aa).

The Walker A motif signature appears at 208–215; that stretch reads VPRRHGKT. The Walker B motif signature appears at 300–305; sequence LLIVDE. Glu-305 acts as the For ATPase activity in catalysis. Active-site for nuclease activity residues include Asp-458, Glu-529, and Asp-643.

Belongs to the herpesviridae TRM3 protein family. As to quaternary structure, interacts with the terminase subunits TRM1 and TRM2. Interacts with portal protein.

It is found in the host nucleus. In terms of biological role, component of the molecular motor that translocates viral genomic DNA in empty capsid during DNA packaging. Forms a tripartite terminase complex together with TRM1 and TRM2 in the host cytoplasm. Once the complex reaches the host nucleus, it interacts with the capsid portal vertex. This portal forms a ring in which genomic DNA is translocated into the capsid. TRM3 carries an RNase H-like nuclease activity that plays an important role for the cleavage of concatemeric viral DNA into unit length genomes. In Homo sapiens (Human), this protein is Tripartite terminase subunit 3.